A 1485-amino-acid polypeptide reads, in one-letter code: Chromosome partition protein MukB (1485 aa).

34-41 (GGNGAGKS) lines the ATP pocket. Coiled-coil stretches lie at residues 337-480 (LNLV…QAYQ), 509-605 (QHLA…PVWL), 780-805 (RAARENRLETLYQERDRLAERYATLS), 835-915 (EAEI…IQQH), 977-1116 (GMLT…AKAG), and 1210-1235 (EAIEQMEIELGRLTEELTAREQKLAI). The flexible hinge stretch occupies residues 666–783 (PSGAEDARLI…EVPLFGRAAR (118 aa)).

Belongs to the SMC family. MukB subfamily. In terms of assembly, homodimerization via its hinge domain. Binds to DNA via its C-terminal region. Interacts, and probably forms a ternary complex, with MukE and MukF via its C-terminal region. The complex formation is stimulated by calcium or magnesium. Interacts with tubulin-related protein FtsZ.

The protein localises to the cytoplasm. It is found in the nucleoid. In terms of biological role, plays a central role in chromosome condensation, segregation and cell cycle progression. Functions as a homodimer, which is essential for chromosome partition. Involved in negative DNA supercoiling in vivo, and by this means organize and compact chromosomes. May achieve or facilitate chromosome segregation by condensation DNA from both sides of a centrally located replisome during cell division. This Yersinia pseudotuberculosis serotype O:1b (strain IP 31758) protein is Chromosome partition protein MukB.